Consider the following 552-residue polypeptide: Thermosome subunit beta (552 aa).

Belongs to the TCP-1 chaperonin family. As to quaternary structure, forms a Heterooligomeric complex of two stacked nine-membered rings; one of alpha and the other of beta subunits. The N-terminus is blocked.

Functionally, molecular chaperone; binds unfolded polypeptides in vitro, and has a weak ATPase activity. This is Thermosome subunit beta (thsB) from Sulfurisphaera tokodaii (strain DSM 16993 / JCM 10545 / NBRC 100140 / 7) (Sulfolobus tokodaii).